Reading from the N-terminus, the 262-residue chain is uncharacterized protein (262 aa).

This is an uncharacterized protein from Bacillus subtilis (strain 168).